A 512-amino-acid chain; its full sequence is METVLVAGFLCVYDDNDINDNFYLPRRTIQEEINSGNGLNIPLNINHNENAVIGTVSSLSVYSTVCFVARVQSKEFLTIIKKIAAKSKLITNTEEKTLPPDPEIECLNSIFPGLSLSNRVGGNERDPFFKHVSICGVGRRPGTIAIFGRNLNWILDRFSSITEAEKEKILSTDQSCVQFFAEEQFKVDLYDLLADSLDTSYIKVRFPKLQSDKQLSGISKSTYIKASENLTANNHTINVNSKVTKETEATDSVSQDDCAVHAPDLISTICSTTHTTHHDLVRMNGSATGNSASLPAPQFSECVFLPKDTFCSLLNATAGAQNKNVTPAAPIFKTDEYITPYPESLSRVDYGNRMNYHIPPPYWYPSMPGFNYKSYRGSQKRCAPTDSDDEMSFPGDPDYTTKKKKRYREDDDRELTKDKNDIKELVDAIGMLRHEISALKYIRSQSPQRQHCTAVDTMPTIEEKNVASPKPSVVNASLTPGQDRNQNLMQSDQSLLSLNKKLFVEALNKMDN.

Active-site charge relay system residues include His47, Ser115, and His131. Residues 264–282 are interaction with pAP; it reads DLISTICSTTHTTHHDLVR. The disordered stretch occupies residues 376–407; sequence RGSQKRCAPTDSDDEMSFPGDPDYTTKKKKRY. A Nuclear localization signal motif is present at residues 402–408; it reads KKKKRYR. Residues 492–512 are interaction with major capsid protein; sequence DQSLLSLNKKLFVEALNKMDN.

The protein belongs to the herpesviridae capsid scaffolding protein family. Homomultimer. Interacts with major capsid protein. As to quaternary structure, exists in a monomer-dimer equilibrium with the dimer being the active species. Capsid scaffolding protein is cleaved by assemblin after formation of the spherical procapsid. As a result, the capsid obtains its mature, icosahedral shape. Cleavages occur at two or more sites: release (R-site) and maturation (M-site).

Its subcellular location is the host cytoplasm. The protein localises to the host nucleus. It carries out the reaction Cleaves -Ala-|-Ser- and -Ala-|-Ala- bonds in the scaffold protein.. Its function is as follows. Acts as a scaffold protein by binding major capsid protein in the cytoplasm, inducing the nuclear localization of both proteins. Multimerizes in the nucleus such as major capsid protein forms the icosahedral T=16 capsid. Autocatalytic cleavage releases the assembly protein, and subsequently abolishes interaction with major capsid protein. Cleavages products are evicted from the capsid before or during DNA packaging. In terms of biological role, protease that plays an essential role in virion assembly within the nucleus. Catalyzes the cleavage of the assembly protein after formation of the spherical procapsid. By that cleavage, the capsid matures and gains its icosahedral shape. The cleavage sites seem to include -Ala-Ser-, -Ala-Ala-, as well as Ala-Thr bonds. Assemblin and cleavages products are evicted from the capsid before or during DNA packaging. Functionally, plays a major role in capsid assembly. Acts as a scaffold protein by binding major capsid protein. Multimerizes in the nucleus such as major capsid protein forms the icosahedral T=16 capsid. Cleaved by assemblin after capsid completion. The cleavages products are evicted from the capsid before or during DNA packaging. The protein is Capsid scaffolding protein (U53) of Human herpesvirus 7 (strain JI) (HHV-7).